The chain runs to 182 residues: Mesencephalic astrocyte-derived neurotrophic factor (182 aa).

The signal sequence occupies residues M1–A24. 4 disulfides stabilise this stretch: C30-C117, C33-C106, C64-C75, and C151-C154. The residue at position 76 (Y76) is a Phosphotyrosine. Positions L96–S158 are interacts with ERN1, EIF2AK3 and ATF6. The segment at T129–A172 is interacts with HSPA5.

It belongs to the ARMET family. As to quaternary structure, interacts directly (via SAP domain) with HSPA5/BiP; the interaction inhibits ATP binding to HSPA5/BiP and subsequent nucleotide exchange. Component of a complex containing at least CRELD2, MANF, MATN3 and PDIA4. Interacts (via C-terminus) with ERN1 (via luminal domain); the interaction is decreased in the presence of increasing concentrations of Ca(2+). In terms of processing, may contain sialic acid residues.

The protein localises to the secreted. It is found in the endoplasmic reticulum lumen. Its subcellular location is the sarcoplasmic reticulum lumen. Functionally, selectively promotes the survival of dopaminergic neurons of the ventral mid-brain. Modulates GABAergic transmission to the dopaminergic neurons of the substantia nigra. Enhances spontaneous, as well as evoked, GABAergic inhibitory postsynaptic currents in dopaminergic neurons. Inhibits cell proliferation and endoplasmic reticulum (ER) stress-induced cell death. Retained in the ER/sarcoplasmic reticulum (SR) through association with the endoplasmic reticulum chaperone protein HSPA5 under normal conditions. Stabilizes HSPA5/BiP in its substrate-bound ADP state, which facilitates HSPA5/BiP incorporation into chaperone-client complexes during endoplasmic reticulum stress, its interaction with HSPA5/BiP inhibits ATP binding to HSPA5/BiP and subsequent nucleotide exchange. As a result acts as a repressor of the unfolded protein response (UPR) pathway. Up-regulated and secreted by the ER/SR in response to ER stress and hypoxia. Following secretion by the ER/SR, directly binds to 3-O-sulfogalactosylceramide, a lipid sulfatide in the outer cell membrane of target cells. Sulfatide binding promotes its cellular uptake by endocytosis, and is required for its role in alleviating ER stress and cell toxicity under hypoxic and ER stress conditions. Essential for embryonic lung development. Required for the correct postnatal temporal and structural development of splenic white pulp. Required for the repair-associated myeloid response in skeletal muscle, acts as a regulator of phenotypic transition towards prorepair macrophages in response to muscle injury and as a result limits excessive proinflammatory signaling. Represses RELA expression and therefore NF-kB signaling in the myocardium, as a result limits macrophage infiltration of injured tissue and M1 macrophage differentiation in response to myocardial injury. Required for endochondral ossification in long bones and the skull during postnatal development. In Homo sapiens (Human), this protein is Mesencephalic astrocyte-derived neurotrophic factor.